We begin with the raw amino-acid sequence, 370 residues long: Cell division protein DivIB (370 aa).

A disordered region spans residues 1-65; it reads MKKKKDEELT…SNKKGTKRIV (65 aa). The Cytoplasmic portion of the chain corresponds to 1 to 74; that stretch reads MKKKKDEELT…VKEQRLSRQK (74 aa). Basic residues-rich tracts occupy residues 25-34 and 47-63; these read SRFKRKRKAT and RNNR…GTKR. Residues 75–95 form a helical membrane-spanning segment; sequence LGILIGSTLIVIALFFGYFYS. Over 96 to 370 the chain is Extracellular; sequence SISRVQKFSV…STVNTQQDID (275 aa). Positions 98-169 constitute a POTRA domain; the sequence is SRVQKFSVSG…GKVKIKVKEN (72 aa). The interval 295-370 is disordered; sequence SGWTDEAKAA…STVNTQQDID (76 aa). Composition is skewed to low complexity over residues 304 to 314 and 327 to 342; these read ASESSKSAESS and SESA…STET. Residues 356–370 show a composition bias toward polar residues; it reads SSNAESTVNTQQDID.

This sequence belongs to the FtsQ/DivIB family. DivIB subfamily.

Its subcellular location is the cell membrane. In terms of biological role, cell division protein that may be involved in stabilizing or promoting the assembly of the division complex. The protein is Cell division protein DivIB of Pediococcus pentosaceus (strain ATCC 25745 / CCUG 21536 / LMG 10740 / 183-1w).